Reading from the N-terminus, the 255-residue chain is Cytochrome b561 and DOMON domain-containing protein At5g48750 (255 aa).

Positions 1–27 (MFLSSRTIFVGLCFLFVLAPCFTRATT) are cleaved as a signal peptide. Residues 54-169 (LDSFLHYSYV…TVVNHLWQDG (116 aa)) enclose the DOMON domain. A Cytochrome b561 domain is found at 176 to 255 (RLGMHAMSGN…DPTWFYILIL (80 aa)). The chain crosses the membrane as a helical span at residues 216–236 (IHGLVNAVCWGIFIPIGVMAA).

Its subcellular location is the membrane. This chain is Cytochrome b561 and DOMON domain-containing protein At5g48750, found in Arabidopsis thaliana (Mouse-ear cress).